Reading from the N-terminus, the 552-residue chain is Hydroxylamine reductase (552 aa).

Residues Cys5, Cys8, Cys20, and Cys27 each contribute to the [2Fe-2S] cluster site. The hybrid [4Fe-2O-2S] cluster site is built by His251, Glu275, Cys319, Cys407, Cys435, Cys460, Glu494, and Lys496. Cys407 bears the Cysteine persulfide mark.

The protein belongs to the HCP family. [2Fe-2S] cluster is required as a cofactor. The cofactor is hybrid [4Fe-2O-2S] cluster.

The protein resides in the cytoplasm. The catalysed reaction is A + NH4(+) + H2O = hydroxylamine + AH2 + H(+). Catalyzes the reduction of hydroxylamine to form NH(3) and H(2)O. The sequence is that of Hydroxylamine reductase from Shigella flexneri.